The sequence spans 137 residues: Peptide methionine sulfoxide reductase MsrB (137 aa).

Residues 7 to 129 form the MsrB domain; the sequence is AEELKKNLSE…NSASLRFTDG (123 aa). Cys-46, Cys-49, Cys-95, and Cys-98 together coordinate Zn(2+). The active-site Nucleophile is the Cys-118.

This sequence belongs to the MsrB Met sulfoxide reductase family. It depends on Zn(2+) as a cofactor.

The enzyme catalyses L-methionyl-[protein] + [thioredoxin]-disulfide + H2O = L-methionyl-(R)-S-oxide-[protein] + [thioredoxin]-dithiol. This is Peptide methionine sulfoxide reductase MsrB from Escherichia coli (strain K12 / MC4100 / BW2952).